A 491-amino-acid polypeptide reads, in one-letter code: Cytochrome P450 monooxygenase olcB (491 aa).

Residues 5–27 (LLLSLSVCLLYVFITAFWNLYIH) traverse the membrane as a helical segment. Cysteine 435 provides a ligand contact to heme.

The protein belongs to the cytochrome P450 family. Heme is required as a cofactor.

The protein localises to the membrane. Its pathway is secondary metabolite biosynthesis; terpenoid biosynthesis. Cytochrome P450 monooxygenase; part of the gene cluster that mediates the biosynthesis of 15-deoxyoxalicine B. The first step of the pathway is the synthesis of nicotinyl-CoA from nicotinic acid by the nicotinic acid-CoA ligase olcI. Nicotinyl-CoA is then a substrate of polyketide synthase olcA to produce 4-hydroxy-6-(3-pyridinyl)-2H-pyran-2-one (HPPO) which is further prenylated by the polyprenyl transferase olcH to yield geranylgeranyl-HPPO. Geranylgeranyl pyrophosphate is provided by the cluster-specific geranylgeranyl pyrophosphate synthase olcC. The FAD-dependent monooxygenase olcE catalyzes the epoxidation of geranylgeranyl-HPPO and the terpene cyclase olcD catalyzes the cyclization of the terpenoid component, resulting in the formation of the tricyclic terpene moiety seen in predecaturin E. The cytochrome P450 monooxygenase then catalyzes the allylic oxidation of predecaturin E, which is followed by spirocylization with concomitant loss of one molecule of water to form decaturin E. Decaturin E is the substrate of the cytochrome P450 monooxygenase olcJ which hydroxylates it at the C-29 position to form decaturin F. The short-chain dehydrogenase/reductase olcF may catalyze the oxidation of decaturin F to generate the 29-hydroxyl-27-one intermediate, and subsequent hemiacetal formation probably leads to the formation of decaturin C. The dioxygenase olcK may be a peroxisomal enzyme that catalyzes the hydroxylation of decaturin C into decaturin A once decaturin C is shuttled into the peroxisome by the MFS transporter olcL. Finally the cytochrome P450 monooxygenase olcB catalyzes the oxidative rearrangement to yield 15-deoxyoxalicine B. In the absence of olcJ, decaturin E may be shunted to a pathway in which it is oxidized to a ketone, possibly by olcF, to form decaturin D, which undergoes further allylic oxidation to yield decaturin G. Moreover, in the absence of oclK or oclL, oclB can convert decaturin C into 15-deoxyoxalicine A. This is Cytochrome P450 monooxygenase olcB from Penicillium canescens.